Reading from the N-terminus, the 155-residue chain is Large ribosomal subunit protein uL15 (155 aa).

Positions 1–13 (MKLNELRDCEGAT) are enriched in basic and acidic residues. The disordered stretch occupies residues 1–47 (MKLNELRDCEGATKNRKRIGRGIGSGTGKTGGRGVKGQKSRSGVSLN). The segment covering 21-35 (RGIGSGTGKTGGRGV) has biased composition (gly residues).

Belongs to the universal ribosomal protein uL15 family. As to quaternary structure, part of the 50S ribosomal subunit.

In terms of biological role, binds to the 23S rRNA. The sequence is that of Large ribosomal subunit protein uL15 from Bartonella tribocorum (strain CIP 105476 / IBS 506).